Here is a 204-residue protein sequence, read N- to C-terminus: dITP/XTP pyrophosphatase (204 aa).

S11–K16 contributes to the substrate binding site. D76 (proton acceptor) is an active-site residue. D76 contributes to the Mg(2+) binding site. Substrate-binding positions include S77, F158–D161, K181, and H186–R187.

It belongs to the HAM1 NTPase family. In terms of assembly, homodimer. Requires Mg(2+) as cofactor.

The enzyme catalyses XTP + H2O = XMP + diphosphate + H(+). It catalyses the reaction dITP + H2O = dIMP + diphosphate + H(+). The catalysed reaction is ITP + H2O = IMP + diphosphate + H(+). Pyrophosphatase that catalyzes the hydrolysis of nucleoside triphosphates to their monophosphate derivatives, with a high preference for the non-canonical purine nucleotides XTP (xanthosine triphosphate), dITP (deoxyinosine triphosphate) and ITP. Seems to function as a house-cleaning enzyme that removes non-canonical purine nucleotides from the nucleotide pool, thus preventing their incorporation into DNA/RNA and avoiding chromosomal lesions. This chain is dITP/XTP pyrophosphatase, found in Mycobacterium tuberculosis (strain CDC 1551 / Oshkosh).